Here is an 89-residue protein sequence, read N- to C-terminus: Small ribosomal subunit protein uS15 (89 aa).

The protein belongs to the universal ribosomal protein uS15 family. Part of the 30S ribosomal subunit. Forms a bridge to the 50S subunit in the 70S ribosome, contacting the 23S rRNA.

In terms of biological role, one of the primary rRNA binding proteins, it binds directly to 16S rRNA where it helps nucleate assembly of the platform of the 30S subunit by binding and bridging several RNA helices of the 16S rRNA. Its function is as follows. Forms an intersubunit bridge (bridge B4) with the 23S rRNA of the 50S subunit in the ribosome. The sequence is that of Small ribosomal subunit protein uS15 from Staphylococcus epidermidis (strain ATCC 12228 / FDA PCI 1200).